The chain runs to 229 residues: Non-structural protein P8 (229 aa).

Positions 13 to 31 (KMKHNQDRVEEPSQVRVDD) are enriched in basic and acidic residues. Positions 13-46 (KMKHNQDRVEEPSQVRVDDTISQPPRYAPSAPMP) are disordered. Over residues 36-46 (PPRYAPSAPMP) the composition is skewed to low complexity. The next 2 membrane-spanning stretches (helical) occupy residues 119–139 (IIHTTLLVAAVVALLTSVCTL) and 162–182 (SLNPMLGVVNLGATFLMMVCA).

Belongs to the orbivirus NS3 family. Forms homooligomers via coiled-coil motif. Interacts with host OPTN; this interaction inhibits innate immune response.

It is found in the host cell membrane. The protein localises to the host Golgi apparatus. Plays a role in the inhibition of host innate immune response. Interacts with host OPTN and thus inhibits the recruitment of TBK1 to the host Golgi apparatus. In turn, downstream partner IRF3 cannot be activated and IFN-beta production is impaired. Its function is as follows. Facilitates viral particle release either by increasing plasma membrane permeability through a viroporin-like activity or by viral budding. This chain is Non-structural protein P8 (Segment-10), found in Antilocapra americana (Pronghorn).